The following is a 488-amino-acid chain: BTB/POZ domain-containing protein 1 (488 aa).

Residues 1-19 are compositionally biased toward low complexity; sequence MASLGSAAAGEPATGAEAE. The disordered stretch occupies residues 1–42; the sequence is MASLGSAAAGEPATGAEAEPGPPAPPPPPPPPPAPSPSALGP. Pro residues predominate over residues 20-36; that stretch reads PGPPAPPPPPPPPPAPS. A BTB domain is found at 75 to 151; the sequence is SDVRFVLGKG…LYSDEVQIGP (77 aa). Position 85 is an omega-N-methylarginine (Arg85). The BACK domain occupies 190-290; that stretch reads LTQARLFDEP…IRFPLMTIEE (101 aa).

Interacts (via C-terminus) with TOP1. Interacts with TRIM5 isoform Delta. Interacts with CUL3. Strongly expressed in heart and skeletal muscle. Weakly expressed in myoblast C2C12 cells, but strongly up-regulated upon their differentiation into myotubes.

It localises to the cytoplasm. Its pathway is protein modification; protein ubiquitination. In terms of biological role, probable substrate-specific adapter of an E3 ubiquitin-protein ligase complex which mediates the ubiquitination and subsequent proteasomal degradation of target proteins. Seems to regulate expression levels and/or subnuclear distribution of TOP1, via an unknown mechanism. May play a role in mesenchymal differentiation where it promotes myogenic differentiation and suppresses adipogenesis. This Mus musculus (Mouse) protein is BTB/POZ domain-containing protein 1 (Btbd1).